A 495-amino-acid chain; its full sequence is Glutamyl-tRNA(Gln) amidotransferase subunit A (495 aa).

Active-site charge relay system residues include Lys-78 and Ser-159. Ser-183 (acyl-ester intermediate) is an active-site residue.

The protein belongs to the amidase family. GatA subfamily. As to quaternary structure, heterotrimer of A, B and C subunits.

The catalysed reaction is L-glutamyl-tRNA(Gln) + L-glutamine + ATP + H2O = L-glutaminyl-tRNA(Gln) + L-glutamate + ADP + phosphate + H(+). Functionally, allows the formation of correctly charged Gln-tRNA(Gln) through the transamidation of misacylated Glu-tRNA(Gln) in organisms which lack glutaminyl-tRNA synthetase. The reaction takes place in the presence of glutamine and ATP through an activated gamma-phospho-Glu-tRNA(Gln). This chain is Glutamyl-tRNA(Gln) amidotransferase subunit A, found in Rhizorhabdus wittichii (strain DSM 6014 / CCUG 31198 / JCM 15750 / NBRC 105917 / EY 4224 / RW1) (Sphingomonas wittichii).